The chain runs to 356 residues: MKVRKSNNKPLKRSASFTSGTKTGSKSAKSVNSGSKSMKSTKSSSKSYKKIYEEFSDSESSNSEISDNDELSDNEISDNESSDDDEISDNESSDDDEISDNEISDDDGSDNNVYEDNDIRNIIIEDINDNYSKGKFGNFHVVIMKKNGYMNATKLCDNISNKYKNKKFKHWNENKNSKELIEELSNFLKLPKNELIILKKGGTNTEIRGSYAHPVLITHIAYWISPKFAVRIGFCMEEWKKFCEQNELDYYNMLNMAKPLNNNNKEKIIQHELREKYKGVIEIKTKSGYIDLLTDKYLVEIKDYRNWKSAIGQLLVYSVYYPKKIKCMYLFNVESNDINEIKTICFKYDIVLKIYD.

The span at 1–12 (MKVRKSNNKPLK) shows a compositional bias: basic residues. The interval 1 to 114 (MKVRKSNNKP…DDDGSDNNVY (114 aa)) is disordered. Low complexity predominate over residues 14–46 (SASFTSGTKTGSKSAKSVNSGSKSMKSTKSSSK). The span at 66 to 114 (SDNDELSDNEISDNESSDDDEISDNESSDDDEISDNEISDDDGSDNNVY) shows a compositional bias: acidic residues. A KilA-N domain is found at 130-239 (NYSKGKFGNF…VRIGFCMEEW (110 aa)).

The chain is Putative KilA-N domain-containing protein R878 from Acanthamoeba polyphaga (Amoeba).